The primary structure comprises 278 residues: Deoxyribonuclease-1-like 2 (278 aa).

Positions 1 to 21 (MGWPWAPLTAVWALGVMGATA) are cleaved as a signal peptide. Active-site residues include glutamate 99 and histidine 150. Cysteines 189 and 225 form a disulfide.

It belongs to the DNase I family. Mg(2+) serves as cofactor. The cofactor is Ca(2+).

It is found in the cytoplasm. The protein resides in the secreted. In terms of biological role, divalent cation-dependent acid DNA endonuclease involved in the breakdown of the nucleus during corneocyte formation of epidermal keratinocytes. May play an immune role by eliminating harmful DNA released into the extracellular environment by damaged epidermal cells. This is Deoxyribonuclease-1-like 2 (Dnase1l2) from Mus musculus (Mouse).